The primary structure comprises 396 residues: Bone morphogenetic protein 2 (396 aa).

A signal peptide spans 1-23 (MVAGTRCLLALLLPQVLLGGAAG). Positions 24 to 282 (LVPELGRRKF…GHPLHKREKR (259 aa)) are cleaved as a propeptide — cleaved by PCSK5. Residues 84–121 (RRHSGQPGSPAPDHRLERAASRANTVRSFHHEESLEEL) form a disordered region. The residue at position 87 (serine 87) is a Phosphoserine. 4 N-linked (GlcNAc...) asparagine glycosylation sites follow: asparagine 135, asparagine 163, asparagine 164, and asparagine 200. The disordered stretch occupies residues 271 to 293 (GKGHPLHKREKRQAKHKQRKRLK). The span at 274–293 (HPLHKREKRQAKHKQRKRLK) shows a compositional bias: basic residues. Disulfide bonds link cysteine 296–cysteine 361, cysteine 325–cysteine 393, and cysteine 329–cysteine 395. Asparagine 338 is a glycosylation site (N-linked (GlcNAc...) (high mannose) asparagine).

The protein belongs to the TGF-beta family. In terms of assembly, homodimer; disulfide-linked. Interacts with SOSTDC1. Interacts with GREM2, RGMA, RGMB and RGMC. Interacts with ASPN. Interacts with MAFP5. Interacts with FBN1 (via N-terminal domain) and FBN2. Interacts with type I receptor BMPR1A. Interacts with type II receptor BMPR2. Interacts with SCUBE3. Interacts with TNFAIP6 (primarily via Link domain); this interaction is inhibited by hyaluronan. Interacts with ERFE. Interacts with BMPR1A/ALK3; the interaction may induce HAMP expression. Forms heterodimers with BMP6 in vitro; the heterodimer then binds to its receptor BMPR1A /ALK3 and may induce HAMP expression. Interacts with TGFBR3. In terms of tissue distribution, particularly abundant in lung, spleen and colon and in low but significant levels in heart, brain, placenta, liver, skeletal muscle, kidney, pancreas, prostate, ovary and small intestine.

The protein resides in the secreted. In terms of biological role, growth factor of the TGF-beta superfamily that plays essential roles in many developmental processes, including cardiogenesis, neurogenesis, and osteogenesis. Induces cartilage and bone formation. Initiates the canonical BMP signaling cascade by associating with type I receptor BMPR1A and type II receptor BMPR2. Once all three components are bound together in a complex at the cell surface, BMPR2 phosphorylates and activates BMPR1A. In turn, BMPR1A propagates signal by phosphorylating SMAD1/5/8 that travel to the nucleus and act as activators and repressors of transcription of target genes. Also acts to promote expression of HAMP, via the interaction with its receptor BMPR1A/ALK3. Can also signal through non-canonical pathways such as ERK/MAP kinase signaling cascade that regulates osteoblast differentiation. Also stimulates the differentiation of myoblasts into osteoblasts via the EIF2AK3-EIF2A-ATF4 pathway by stimulating EIF2A phosphorylation which leads to increased expression of ATF4 which plays a central role in osteoblast differentiation. Acts as a positive regulator of odontoblast differentiation during mesenchymal tooth germ formation, expression is repressed during the bell stage by MSX1-mediated inhibition of CTNNB1 signaling. This Homo sapiens (Human) protein is Bone morphogenetic protein 2 (BMP2).